A 572-amino-acid polypeptide reads, in one-letter code: 2-succinyl-5-enolpyruvyl-6-hydroxy-3-cyclohexene-1-carboxylate synthase (572 aa).

It belongs to the TPP enzyme family. MenD subfamily. In terms of assembly, homodimer. It depends on Mg(2+) as a cofactor. Mn(2+) is required as a cofactor. Requires thiamine diphosphate as cofactor.

The catalysed reaction is isochorismate + 2-oxoglutarate + H(+) = 5-enolpyruvoyl-6-hydroxy-2-succinyl-cyclohex-3-ene-1-carboxylate + CO2. The protein operates within quinol/quinone metabolism; 1,4-dihydroxy-2-naphthoate biosynthesis; 1,4-dihydroxy-2-naphthoate from chorismate: step 2/7. It functions in the pathway quinol/quinone metabolism; menaquinone biosynthesis. Its function is as follows. Catalyzes the thiamine diphosphate-dependent decarboxylation of 2-oxoglutarate and the subsequent addition of the resulting succinic semialdehyde-thiamine pyrophosphate anion to isochorismate to yield 2-succinyl-5-enolpyruvyl-6-hydroxy-3-cyclohexene-1-carboxylate (SEPHCHC). The polypeptide is 2-succinyl-5-enolpyruvyl-6-hydroxy-3-cyclohexene-1-carboxylate synthase (Aeromonas salmonicida (strain A449)).